We begin with the raw amino-acid sequence, 340 residues long: Heat-inducible transcription repressor HrcA (340 aa).

This sequence belongs to the HrcA family.

In terms of biological role, negative regulator of class I heat shock genes (grpE-dnaK-dnaJ and groELS operons). Prevents heat-shock induction of these operons. This is Heat-inducible transcription repressor HrcA from Burkholderia ambifaria (strain MC40-6).